The sequence spans 268 residues: Riboflavin transport system permease protein RibX (268 aa).

6 helical membrane-spanning segments follow: residues 24 to 44 (ALGL…GVTL), 76 to 96 (LATL…ALIL), 119 to 139 (AIPV…GLTS), 140 to 160 (KVLV…VVAI), 185 to 205 (VEAP…LALA), and 236 to 256 (LIFV…VLAG). The ABC transmembrane type-1 domain maps to 75–255 (TLATLSAALG…LITLTLYVLA (181 aa)).

The protein belongs to the binding-protein-dependent transport system permease family. As to quaternary structure, the complex is likely composed of an ATP-binding protein, a transmembrane protein (RibX) and a solute-binding protein (RibY).

The protein resides in the cell membrane. In terms of biological role, part of an ABC transporter complex that transports riboflavin into the cell. The chain is Riboflavin transport system permease protein RibX from Chloroflexus aurantiacus (strain ATCC 29366 / DSM 635 / J-10-fl).